A 203-amino-acid chain; its full sequence is Endo-type membrane-bound lytic murein transglycosylase A (203 aa).

The N-terminal stretch at 1–15 is a signal peptide; the sequence is MKLRWFAFLVVLLAG. Residue cysteine 16 is the site of N-palmitoyl cysteine attachment. A lipid anchor (S-diacylglycerol cysteine) is attached at cysteine 16.

This sequence belongs to the transglycosylase Slt family.

It localises to the cell outer membrane. The catalysed reaction is Endolytic cleavage of the (1-&gt;4)-beta-glycosidic linkage between N-acetylmuramic acid (MurNAc) and N-acetylglucosamine (GlcNAc) residues in peptidoglycan with concomitant formation of a 1,6-anhydrobond in the MurNAc residue.. Its function is as follows. Murein-degrading enzyme. May play a role in recycling of muropeptides during cell elongation and/or cell division. Preferentially cleaves at a distance of more than two disaccharide units from the ends of the glycan chain. The sequence is that of Endo-type membrane-bound lytic murein transglycosylase A from Citrobacter koseri (strain ATCC BAA-895 / CDC 4225-83 / SGSC4696).